A 293-amino-acid polypeptide reads, in one-letter code: Cytochrome c biogenesis protein CcsA (293 aa).

The next 8 helical transmembrane spans lie at 12-32, 39-59, 78-98, 99-119, 142-162, 216-236, 250-267, and 273-293; these read INIL…AKLT, VFSL…GMLL, LFLS…LSII, GAIG…ILPP, VMIF…IYVI, FISL…VWAN, TWAL…HIRI, and KIYA…VTWE.

The protein belongs to the CcmF/CycK/Ccl1/NrfE/CcsA family. In terms of assembly, may interact with Ccs1.

The protein resides in the plastid. The protein localises to the chloroplast thylakoid membrane. Required during biogenesis of c-type cytochromes (cytochrome c6 and cytochrome f) at the step of heme attachment. The protein is Cytochrome c biogenesis protein CcsA of Cyanidium caldarium (Red alga).